Consider the following 330-residue polypeptide: Malate dehydrogenase (330 aa).

An NAD(+)-binding site is contributed by 15 to 21; it reads GGTGQIA. Substrate is bound by residues Arg96 and Arg102. Residues Asn109, Gln116, and 133 to 135 contribute to the NAD(+) site; that span reads VGN. Residues Asn135 and Arg166 each contribute to the substrate site. His191 serves as the catalytic Proton acceptor.

This sequence belongs to the LDH/MDH superfamily. MDH type 2 family.

The catalysed reaction is (S)-malate + NAD(+) = oxaloacetate + NADH + H(+). In terms of biological role, catalyzes the reversible oxidation of malate to oxaloacetate. The sequence is that of Malate dehydrogenase from Chlamydia caviae (strain ATCC VR-813 / DSM 19441 / 03DC25 / GPIC) (Chlamydophila caviae).